We begin with the raw amino-acid sequence, 320 residues long: o-succinylbenzoate synthase (320 aa).

Catalysis depends on lysine 133, which acts as the Proton donor. The Mg(2+) site is built by aspartate 161, glutamate 190, and aspartate 213. The active-site Proton acceptor is the lysine 235.

This sequence belongs to the mandelate racemase/muconate lactonizing enzyme family. MenC type 1 subfamily. The cofactor is a divalent metal cation.

It carries out the reaction (1R,6R)-6-hydroxy-2-succinyl-cyclohexa-2,4-diene-1-carboxylate = 2-succinylbenzoate + H2O. It functions in the pathway quinol/quinone metabolism; 1,4-dihydroxy-2-naphthoate biosynthesis; 1,4-dihydroxy-2-naphthoate from chorismate: step 4/7. It participates in quinol/quinone metabolism; menaquinone biosynthesis. Functionally, converts 2-succinyl-6-hydroxy-2,4-cyclohexadiene-1-carboxylate (SHCHC) to 2-succinylbenzoate (OSB). This chain is o-succinylbenzoate synthase, found in Salmonella paratyphi C (strain RKS4594).